A 74-amino-acid chain; its full sequence is uncharacterized protein (74 aa).

A helical transmembrane segment spans residues 15-32 (FLHALTVTFLSDIFVWLV).

Its subcellular location is the membrane. This is an uncharacterized protein from Saccharomyces cerevisiae (strain ATCC 204508 / S288c) (Baker's yeast).